The primary structure comprises 641 residues: MTDTSTQNTATPTDEYGAEIHPKHSFSPIEKTVESFGKTFTLEVPETEIQLDDSPTGPNEPVRIYRTRGPWAEPTKGLEGLRSEWIEARDDVEAYEGRRRNLLDDGNRAVKRGEASEEWKGSTRPTLRAKEGKRVTQMHYARQGIITPEMEYVALREHCDVEKVREQVASGKAIIPNNINHPESEPMIIGNAFTTKINANIGNSAVTSSIREEVDKLRWATRWGADTVMDLSTGNDIHTTREWILRNSPVPIGTVPIYQALEKVDGVAEDLTWEIFRDTVIEQCEQGVDYMTIHAGVRLPFVPLTTKRVTGIVSRGGSIMAGWCLAHHKESFLYENFDELCEIFAKYDVAFSLGDGLRPGSIADANDAAQFAELKTIGELTHRAWEYDVQVMVEGPGHVPLNMVQVNNEKEQEWCGGAPFYTLGPLVTDIAPGYDHITSAIGAANIAMGGTAMLCYVTPKEHLGLPNKDDVKTGVITYKVSAHAADVAKGHPGAHEWDDAMSKARFEFRWHDQFALSLDPDTAQAYHDETLPAEPAKTAHFCSMCGPKFCSMRISQDIRDAFGDEIDEALATDQKQSLVKDLGLPGFGRQSVDGIDSLSAAGEEEMAEEFRRAGSQLYLNRDEAKEVAEDLQKEAAAHGER.

Positions 1–12 are enriched in polar residues; it reads MTDTSTQNTATP. Residues 1–25 are disordered; the sequence is MTDTSTQNTATPTDEYGAEIHPKHS. Substrate-binding positions include Asn-200, Met-229, Tyr-258, His-294, 314–316, 355–358, and Glu-394; these read SRG and DGLR. Residue His-398 coordinates Zn(2+). Tyr-421 contributes to the substrate binding site. His-462 contacts Zn(2+). 3 residues coordinate [4Fe-4S] cluster: Cys-542, Cys-545, and Cys-550.

Belongs to the ThiC family. The cofactor is [4Fe-4S] cluster.

It catalyses the reaction 5-amino-1-(5-phospho-beta-D-ribosyl)imidazole + S-adenosyl-L-methionine = 4-amino-2-methyl-5-(phosphooxymethyl)pyrimidine + CO + 5'-deoxyadenosine + formate + L-methionine + 3 H(+). Its pathway is cofactor biosynthesis; thiamine diphosphate biosynthesis. In terms of biological role, catalyzes the synthesis of the hydroxymethylpyrimidine phosphate (HMP-P) moiety of thiamine from aminoimidazole ribotide (AIR) in a radical S-adenosyl-L-methionine (SAM)-dependent reaction. The chain is Phosphomethylpyrimidine synthase from Corynebacterium jeikeium (strain K411).